A 604-amino-acid chain; its full sequence is Aspartate--tRNA(Asp/Asn) ligase (604 aa).

An L-aspartate-binding site is contributed by glutamate 175. The aspartate stretch occupies residues 199-202 (QQFK). Residues arginine 221 and histidine 456 each contribute to the L-aspartate site. 221–223 (RDE) provides a ligand contact to ATP. Glutamate 496 contributes to the ATP binding site. Arginine 503 lines the L-aspartate pocket. 548–551 (GVDR) contributes to the ATP binding site.

It belongs to the class-II aminoacyl-tRNA synthetase family. Type 1 subfamily. In terms of assembly, homodimer.

The protein localises to the cytoplasm. It catalyses the reaction tRNA(Asx) + L-aspartate + ATP = L-aspartyl-tRNA(Asx) + AMP + diphosphate. In terms of biological role, aspartyl-tRNA synthetase with relaxed tRNA specificity since it is able to aspartylate not only its cognate tRNA(Asp) but also tRNA(Asn). Reaction proceeds in two steps: L-aspartate is first activated by ATP to form Asp-AMP and then transferred to the acceptor end of tRNA(Asp/Asn). This is Aspartate--tRNA(Asp/Asn) ligase from Methylobacterium nodulans (strain LMG 21967 / CNCM I-2342 / ORS 2060).